A 222-amino-acid chain; its full sequence is MRIDIISVLPKIIESPFKHSILKRAQEKRLVEIYIHSLREYSTDKHHRVDDYPFGGGSGMVLQCEPIDRAISSLQLQRNYDEIIYTSPDGETFNQQIANDLSICYNLIILCGHYKGIDYRIREHLITREISIGDYVLTGGELAAVVICDTIVRLIPGVINDEQSALSDSFQDNLLAPPIYTRPSNYKGWIVPDILLSGHKAKIKDWELQQSIDRTKRLRPDL.

S-adenosyl-L-methionine-binding positions include glycine 112 and 132 to 137; that span reads IGDYVL.

The protein belongs to the RNA methyltransferase TrmD family. In terms of assembly, homodimer.

Its subcellular location is the cytoplasm. It catalyses the reaction guanosine(37) in tRNA + S-adenosyl-L-methionine = N(1)-methylguanosine(37) in tRNA + S-adenosyl-L-homocysteine + H(+). Its function is as follows. Specifically methylates guanosine-37 in various tRNAs. The sequence is that of tRNA (guanine-N(1)-)-methyltransferase from Azobacteroides pseudotrichonymphae genomovar. CFP2.